Here is a 4998-residue protein sequence, read N- to C-terminus: MLPLALLFGMLWTQANGHWCEQIETVHVEEEVTPRQEDLVPCTSLYHYSRLGWQLDLSWSGRVGLTRPPALGLCAIYKPPETRPATWNRTVRACCPGWGGAHCTDALAETSPKGHCFVTWHCQPLAGSANSSAGSLEDPADELGVWPLTLNDPILFPGMSLQWQGDWLVLSGGLGVVVRLDRSSSISISVDHEFWGRTQGLCGLYNGRPEDDFVEPGGGLATLAATFGNSWKLPGSEPGCLDAVEVAWGCESLLGGTLTDLEAVKLQAQAQDMCHQLLEGPFWQCHGQVQPDEYHETCLFAYCVGATAGNGPEGQLEAVCATFANYAQACARQHIYVHWRKPGFCERVCPGGQLYSDCVSSCPPSCSAVAQGEEGSCGKECVSGCECPTGLFWDGALCVPAAHCPCYHRRQRYAPGDTVKQQCNPCVCQDGRWHCAQALCPAECAVGGDGHYFTFDGRSFFFRGTPGCHYSLVQDSVKGQLLVVLEHGACDTGSCLHALSVFLGNTHIQLRYSGAVLVDGEDVDLPWIGVEGFNISWASSTFLLLHWPGAWVLWGVAEPAAYITLDPRHAYQVQGLCGTFTWKQQDDFLTPAGDIETSVTAFASKFQVSGDGRCPLVDKSPLFCSSYSQHLTFTEAACAILHGHAFQECHGLVDREPFRLRCLEAVCGCAPGRDCLCPVLSAYTRHCAQEGVLLQWRNETLCPVSCPGGQVYQECAPVCGHHCGEPEDCKELGICVAGCNCPPGLLWDLEGQCVPPSMCHCQFGGHRYTINTTTVRDCSHCICQERGLWNCTAHHCPRQWALCPRELIYVPGACLLTCDSPRANHSCWAGSTDGCVCPPGTVLLDKHCVSPDLCPCRHNGQWYPPNATIQEDCNICVCQGQRWHCTGQRCSGWCQASGAPHYVTFDGLVFTFPGACEYLLVREAGGRFSVSVQNLPCGASGLTCTKALVVRLDSTVVHMLRGQAVTVNGVSIRLPKVYTGPGLSLHHAGLFLLLTTRLGLTLLWDGGTRVLVQLSPHFHGRVAGLCGNFDSDASNDLRSRQGVLEPTAELTAHSWRLNPLCPEPGDLPHPVNAHRANWARARCEVILQPIFAPCHTEVPPQQYYEWCVYDACGCDTGGDCECLCSAIATYADECARHRHHVRWRSQELCPLQCEGGQVYEPCGSTCPPTCHDHHSELRWHCQVITCVEGCFCPEGTLLHGGACMKLAACPCEWQGSFFPPGTVLQKDCGNCTCQGSQWHCDRGGAPCEDMEPGCAEGETLCRENGHCVPLEWLCDNQDDCGDGSDEEGCATSVCGEGQMSCQSGHCLPLSLICDGQDDCGDGTDEQGCLCPHGSLACADGRCLPPALLCNGHPDCLDAADEESCLGPVSCISGEVSCVDGTCVRTIQLCDGVWDCPDGADEGPSHCSLPSLPTPPGGIGQNPSTSSLDTAPSPVGSTSPASPCSLLEFQCNSGECTPRGWRCDQEEDCTDGSDELDCGGPCMLYQVPCAHSPHCVSPGQLCDGVTQCPDGSDEDPDVCEEQSASGGANRTGAPCPEFSCPDGTCIDFLLVCDGNPDCELADETEPSLDEQGCGAWGSWGPWAPCSQTCGSGTRSRNRNCSTSSLQVLQNCPGLQHQSQACFTEACPVDGEWSSWSPWSPCSEPCGGTTTRHRQCRPPQNGGQDCALLPGSTHSTRQTSPCPQEGCLNATCFGELVFRTCAPCPLTCDDISGQAACPPDRPCSSPGCWCPDGKVLNTEGQCVRPRQCPCLVDGAHYWPGQRIKMDCQLCFLDCGWSSWSPWAECLGPCSSQSLQWSFRSPNNPRLSGHGRQCRGIHRKARRCQTEACEGCEQWGLMYNVGERWRGGPCMVCECLHSSITHCSPYCPIGSCPQGWVLVEGMGESCCHCALPEKNQTVIHMTTPAPAPASAPSPQIGAHLVTYVLPPTADACYSPLGLAGLPMWAPSQHWEHITRADPVEAPMAGPGPREGASAEWHTQPLYLQLDLRRPRNLTGIIVQRAGSSAAYVSTLSLQFSSDNLQWHNYVNSLSSTLSPPKPSPESSNHMAPEVWTFDQMVQARYIRVWPHSGHLRDNNQHDIFLWVELLGLSPLAPLCPGSRHRCASGECAPKGGPCDGAVDCDDGSDEEGCGSLHASTTSRTPALSPTQPGKFPREVSEDLRQGAEAMTSHSPPSSGETAGLIPASEGTLPVSGQPMQTLSATSTFPPGAKSLHPGMAAVTVHPPHSVTPGAPVGQTVSPRPFPPMPCGPGQVPCDVLGCVEQEQLCDGREDCLDGSDEQHCASAEPFTVPTTALPGLPASKALCSPSQLRCGSGECLPFEHRCDLQVNCQDGSDEDNCVDCVLAPWSGWSDCSRSCGLGLIFQHRELLRLPLPGGSCLLDQFRSQSCFVQACPVAGAWAEWGPWTACSVSCGGGHQSRQRSCVDPPPKNGGAPCPGPSHEKAPCNLQLCPGDTDCEPGLVHVNAELCQKGLVPPCPPSCLDPEANRSCSGHCMEGCRCPPGLLLQDSHCLPLSECPCLVGQKLIQPRLAFLLDNCSQCICEKGTLLCKPGACSQSCGWSAWSPWTACDRSCGSGVRARFRSPTNPPVAFGGSPCEGDRQELQACYTDCGTEIPGWTPWTSWSSCSQSCLVPGGDPGWRQRSRLCPSSRDTFCPGEATQEEPCSPPVCPVPSAWGLWASWSTCSASCNGGIQTRGRSCSGSAPGNPVCLGPHTQTRDCNMHPCTAQCPGNMVFRSAEQCLEEGGPCPQLCLAQDPGVECTGSCAPSCNCPPGLFLHNASCLPRSQCPCQLHGQLYAPGAVAHLDCNNCTCISGEMVCTSKRCPVACGWSPWTPWSPCSQSCNVGIRRRFRAGTEPPAAFGGAECQGPNLDAEFCSLRPCRGPGAAWSSWTPCSVPCGGGYRNRTQGSGPHSPIEFSTCSLQPCAGPVPGVCPEDQQWLDCAQGPASCAHLSIPGEANQTCHPGCYCLSGMLLLNNVCVPVQDCPCAHRGRLYSPGSAVHLPCENCSCISGLITNCSSWPCEEGQPAWSSWTPWSVCSASCNPARRHRHRFCARPPHRAPFSLVLLTTVAAPTTLCPGPEAEEEPCLLPGCNQAGGWSPWSPWSGCSRSCGGGLRSRTRACDQPSPQGLGDFCEGPQAQGEACQAQPCPVTNCSAMEGAEYSPCGPPCPRSCDDLVHCVWRCQPGCYCPLGKVLSADGAICVKPSYCSCLDLLTGKRHHAGTQLMRPDGCNHCTCMEGRLNCTDLPCQVSGDWCPWSKWTACSQPCRGQTRTRSRACVCPAPQHGGSPCPEESGGTGVQHQMEACPNATACPVDGAWSPWGPWSSCDACLGQSYRSRVCSHPPISDGGKPCLGGYQQSRPCRNSSTLCTDCGGGQDLLPCGQPCPHSCQDLSLGSTCQPGSAGCQSGCGCPPGQLSQDGLCVFPVDCHCHFQPRAMGIPENRSRSVGSTLSSWESLEPGEVVTGPCDNCTCVAGILQCHEVPSCPGPGIWSSWGPWEKCSVSCGGGEQLRSRQCARPPCPGLAQQSRICHIHVCRETGCPAGRLYRECQPSDGCPFSCAHVTGQVACFSERCKEGCHCPEGTFQHHVACVQECPCVLTVLLLQELGLASAALGSYPTLLGDEGKPLGPGVELLPGQMLQTDCGNCSCVHGKLSCSMVECSRVHGSFGPWGMWSLCSRSCGGLGTRTRTRQCVLPTLAPGGLSCRGPLQDLEYCFSPECPGTAGSTVEPVTGLAGGWGPWSPWSPCSHSCTDPAHPAWRSRTRLCLANCTVGDSSQERPCNLPSCAALLPCPGPGCGSGNCFWTSWAPWEPCSRSCGVGQQRRLRAYHPPGPGGHWCPDILTAYQERRFCNLRACPVPGGWSHWSPWSWCDRSCGGGRSLRSRSCSSPPPKNGGTSCVGERHHVRPCNPMPCEEGCPAGMEMVSCANHCPYSCSDLQEGGMCQEDQACQLGCRCSEGFLEQDGGCVPVGHCECTDAQGRSWAPGSQHQDACNNCSCQAGQLSCTAQLCSPPAHCAWSHWSAWSSCSHSCGPQGQQSRFRSSTSGSWALECQKEQSQSQPCPEVPCPPLCLHEAHLHELGDNWLHGECQQCSCTPEGAICKDTDCAVPRGWTLWSSWSYCSVSCGGGSQVRTRSCTVSAPPHGSLSCEGPDTQTRHCGQQLCLQKLERCSWGPWGPCSRSCGTGLASRSGSCPCLLTKEDSKCNDTFLGLDTQACYSGPCQDDCTWGDWSSWTRCSCKVLVQQRYRHQVPAPGQAGEGTPCTRLDGHFRPCTIGNCSEDSCPPPFEFQSCGSPCAGLCATHLNHRLCQDLPPCQPGCYCPKGLLEQAGSCILPEQCNCWHISGEGARVTLAPGDRLQLGCKECVCRRGELQCSSQGCEGLLPLTGWSEWSPCGPCLPQSALAPASRTALEGHWPLNTSDLPPPSVTLLASEQYRHRLCLDPETRRPWAGDPALCTVPLSQQRLCPDPGACNDTCQWGPWGPWSPCQMPCSGGFKLRWRVARDTSAGECPGPWAQTESCNMGSCPGESCETRDTVFTLDCANQCPRSCADLWDGVQCLQGPCSPGCRCPPGQLVQDGHCVPISSCRCGLPSANASWELAPTQVVQLDCHNCTCINGTLMCPHLECPVLGPWSAWSECSAVCGKGTMVRHRSCEEHPDREPCQALDLQQWQECNLQACPECPPGQVLSTCATMCPSLCSHLWPGTICVREPCQLGCGCPGGQLLYNGTCIPPEACPCTQFSLPWGLTLPLEEQARELPSGTVLTRNCTHCTCQGGAFICSLTDCQECAPGEIWQHGKLGPCEKTCPEMNMTQAWSNCTEAQAPGCVCQLGYFRSQTGLCVPEDHCECWHHGSPHLPGSEWQEACESCRCLHGKSVCIRHCPELSCAQGEVIMQEPGSCCPICQQDTLKEEPVSCRYLTELRNLTKGPCHLDQIEVSYCSGHCRSSTNVMTEEPYLQSQCDCCSYRLDPDSPVRILNLLCPDGHTEPVVLPVIHSCQCSACQGGDFSKH.

Positions 1–17 (MLPLALLFGMLWTQANG) are cleaved as a signal peptide. An EMI domain is found at 18 to 102 (HWCEQIETVH…ACCPGWGGAH (85 aa)). The region spanning 72–241 (GLCAIYKPPE…KLPGSEPGCL (170 aa)) is the VWFD 1 domain. 2 disulfides stabilise this stretch: cysteine 74–cysteine 202 and cysteine 103–cysteine 240. N-linked (GlcNAc...) asparagine glycosylation is found at asparagine 88 and asparagine 130. The region spanning 349 to 404 (CPGGQLYSDCVSSCPPSCSAVAQGEEGSCGKECVSGCECPTGLFWDGALCVPAAHC) is the TIL 1 domain. Residues 404–496 (CPCYHRRQRY…HGACDTGSCL (93 aa)) enclose the VWFC 1 domain. The VWFD 2 domain maps to 442-615 (AECAVGGDGH…FQVSGDGRCP (174 aa)). 2 cysteine pairs are disulfide-bonded: cysteine 444–cysteine 577 and cysteine 468–cysteine 614. Asparagine 534 and asparagine 698 each carry an N-linked (GlcNAc...) asparagine glycan. In terms of domain architecture, TIL 2 spans 706 to 759 (CPGGQVYQECAPVCGHHCGEPEDCKELGICVAGCNCPPGLLWDLEGQCVPPSMC). N-linked (GlcNAc...) asparagine glycans are attached at residues asparagine 771, asparagine 790, asparagine 824, and asparagine 866. The VWFD 3 domain occupies 892-1062 (GWCQASGAPH…HSWRLNPLCP (171 aa)). 3 cysteine pairs are disulfide-bonded: cysteine 894–cysteine 1026, cysteine 916–cysteine 1061, and cysteine 937–cysteine 944. A TIL 3 domain is found at 1153-1209 (CEGGQVYEPCGSTCPPTCHDHHSELRWHCQVITCVEGCFCPEGTLLHGGACMKLAAC). A glycan (N-linked (GlcNAc...) asparagine) is linked at asparagine 1230. LDL-receptor class A domains are found at residues 1253–1290 (GCAEGETLCRENGHCVPLEWLCDNQDDCGDGSDEEGCA), 1293–1328 (VCGEGQMSCQSGHCLPLSLICDGQDDCGDGTDEQGC), 1329–1365 (LCPHGSLACADGRCLPPALLCNGHPDCLDAADEESCL), and 1369–1407 (SCISGEVSCVDGTCVRTIQLCDGVWDCPDGADEGPSHCS). Intrachain disulfides connect cysteine 1254-cysteine 1267, cysteine 1261-cysteine 1280, cysteine 1274-cysteine 1289, cysteine 1294-cysteine 1306, cysteine 1301-cysteine 1319, cysteine 1313-cysteine 1328, cysteine 1330-cysteine 1342, cysteine 1337-cysteine 1355, cysteine 1349-cysteine 1364, cysteine 1370-cysteine 1382, cysteine 1377-cysteine 1395, and cysteine 1389-cysteine 1406. The interval 1406–1440 (CSLPSLPTPPGGIGQNPSTSSLDTAPSPVGSTSPA) is disordered. Residues 1420–1440 (QNPSTSSLDTAPSPVGSTSPA) show a composition bias toward polar residues. LDL-receptor class A domains follow at residues 1442 to 1478 (PCSLLEFQCNSGECTPRGWRCDQEEDCTDGSDELDCG) and 1480 to 1519 (PCMLYQVPCAHSPHCVSPGQLCDGVTQCPDGSDEDPDVCE). Cystine bridges form between cysteine 1443–cysteine 1455, cysteine 1450–cysteine 1468, cysteine 1462–cysteine 1477, cysteine 1481–cysteine 1494, cysteine 1488–cysteine 1507, and cysteine 1501–cysteine 1518. Asparagine 1528 carries N-linked (GlcNAc...) asparagine glycosylation. The LDL-receptor class A 7 domain occupies 1533-1571 (PCPEFSCPDGTCIDFLLVCDGNPDCELADETEPSLDEQG). Intrachain disulfides connect cysteine 1534-cysteine 1544, cysteine 1539-cysteine 1557, cysteine 1551-cysteine 1572, cysteine 1584-cysteine 1620, cysteine 1588-cysteine 1625, cysteine 1599-cysteine 1610, cysteine 1640-cysteine 1680, cysteine 1644-cysteine 1685, and cysteine 1654-cysteine 1664. 2 consecutive TSP type-1 domains span residues 1572 to 1626 (CGAW…EACP) and 1628 to 1686 (DGEW…EGCL). The N-linked (GlcNAc...) asparagine glycan is linked to asparagine 1598. N-linked (GlcNAc...) asparagine glycosylation occurs at asparagine 1687. The region spanning 1692–1746 (GELVFRTCAPCPLTCDDISGQAACPPDRPCSSPGCWCPDGKVLNTEGQCVRPRQC) is the TIL 4 domain. EGF-like domains follow at residues 1702–1741 (CPLTCDDISGQAACPPDRPCSSPGCWCPDGKVLNTEGQCV) and 1742–1768 (RPRQCPCLVDGAHYWPGQRIKMDCQLC). The 57-residue stretch at 1771–1827 (DCGWSSWSPWAECLGPCSSQSLQWSFRSPNNPRLSGHGRQCRGIHRKARRCQTEACE) folds into the TSP type-1 3 domain. Intrachain disulfides connect cysteine 1772–cysteine 1811, cysteine 1783–cysteine 1787, and cysteine 1821–cysteine 1826. The 61-residue stretch at 1827–1887 (EGCEQWGLMY…GMGESCCHCA (61 aa)) folds into the VWFC 2 domain. Residues asparagine 1892 and asparagine 1989 are each glycosylated (N-linked (GlcNAc...) asparagine). Residues 1929 to 2085 (CYSPLGLAGL…IFLWVELLGL (157 aa)) enclose the F5/8 type C domain. The LDL-receptor class A 8 domain maps to 2091–2127 (LCPGSRHRCASGECAPKGGPCDGAVDCDDGSDEEGCG). Intrachain disulfides connect cysteine 2092-cysteine 2104, cysteine 2099-cysteine 2117, and cysteine 2111-cysteine 2126. A disordered region spans residues 2119–2209 (DGSDEEGCGS…TFPPGAKSLH (91 aa)). A compositionally biased stretch (polar residues) spans 2130-2144 (HASTTSRTPALSPTQ). Over residues 2148-2158 (FPREVSEDLRQ) the composition is skewed to basic and acidic residues. 2 stretches are compositionally biased toward polar residues: residues 2164–2173 (TSHSPPSSGE) and 2190–2201 (QPMQTLSATSTF). 2 LDL-receptor class A domains span residues 2242–2278 (PCGPGQVPCDVLGCVEQEQLCDGREDCLDGSDEQHCA) and 2299–2335 (LCSPSQLRCGSGECLPFEHRCDLQVNCQDGSDEDNCV). Disulfide bonds link cysteine 2243-cysteine 2255, cysteine 2250-cysteine 2268, cysteine 2262-cysteine 2277, cysteine 2300-cysteine 2312, cysteine 2307-cysteine 2325, cysteine 2319-cysteine 2334, cysteine 2337-cysteine 2373, cysteine 2348-cysteine 2352, cysteine 2383-cysteine 2388, cysteine 2403-cysteine 2440, cysteine 2407-cysteine 2445, and cysteine 2418-cysteine 2430. 2 consecutive TSP type-1 domains span residues 2336–2389 (DCVL…QACP) and 2391–2446 (AGAW…QLCP). One can recognise a TIL 5 domain in the interval 2468 to 2511 (VPPCPPSCLDPEANRSCSGHCMEGCRCPPGLLLQDSHCLPLSEC). N-linked (GlcNAc...) asparagine glycosylation is found at asparagine 2481 and asparagine 2530. 3 TSP type-1 domains span residues 2551–2605 (SCGW…TDCG), 2609–2664 (PGWT…PVCP), and 2666–2719 (PSAW…HPCT). Disulfide bonds link cysteine 2552–cysteine 2590, cysteine 2563–cysteine 2567, cysteine 2600–cysteine 2604, cysteine 2620–cysteine 2658, cysteine 2624–cysteine 2663, cysteine 2640–cysteine 2648, cysteine 2678–cysteine 2713, cysteine 2682–cysteine 2718, and cysteine 2693–cysteine 2703. Asparagine 2772 and asparagine 2802 each carry an N-linked (GlcNAc...) asparagine glycan. 2 consecutive TSP type-1 domains span residues 2820–2875 (ACGW…RPCR) and 2876–2919 (GPGA…QPCA). 3 disulfide bridges follow: cysteine 2821–cysteine 2859, cysteine 2832–cysteine 2836, and cysteine 2869–cysteine 2874. Residues asparagine 2897, asparagine 2952, asparagine 2999, and asparagine 3009 are each glycosylated (N-linked (GlcNAc...) asparagine). In terms of domain architecture, TIL 6 spans 2926–2978 (CPEDQQWLDCAQGPASCAHLSIPGEANQTCHPGCYCLSGMLLLNNVCVPVQDC). TSP type-1 domains follow at residues 3019–3086 (QPAW…PGCN) and 3088–3143 (AGGW…QPCP). 6 cysteine pairs are disulfide-bonded: cysteine 3031-cysteine 3080, cysteine 3035-cysteine 3085, cysteine 3046-cysteine 3070, cysteine 3100-cysteine 3137, cysteine 3104-cysteine 3142, and cysteine 3115-cysteine 3127. The N-linked (GlcNAc...) asparagine glycan is linked to asparagine 3146. One can recognise a TIL 7 domain in the interval 3151-3201 (EGAEYSPCGPPCPRSCDDLVHCVWRCQPGCYCPLGKVLSADGAICVKPSYC). Residue asparagine 3235 is glycosylated (N-linked (GlcNAc...) asparagine). 2 TSP type-1 domains span residues 3244 to 3306 (SGDW…TACP) and 3308 to 3363 (DGAW…TLCT). 6 disulfide bridges follow: cysteine 3256-cysteine 3299, cysteine 3260-cysteine 3305, cysteine 3271-cysteine 3283, cysteine 3320-cysteine 3355, cysteine 3323-cysteine 3362, and cysteine 3333-cysteine 3345. N-linked (GlcNAc...) asparagine glycosylation occurs at asparagine 3301. N-linked (GlcNAc...) asparagine glycosylation occurs at asparagine 3357. The TIL 8 domain occupies 3365–3421 (CGGGQDLLPCGQPCPHSCQDLSLGSTCQPGSAGCQSGCGCPPGQLSQDGLCVFPVDC). Residues asparagine 3435 and asparagine 3462 are each glycosylated (N-linked (GlcNAc...) asparagine). In terms of domain architecture, TSP type-1 15 spans 3481 to 3529 (PGIWSSWGPWEKCSVSCGGGEQLRSRQCARPPCPGLAQQSRICHIHVCR). Intrachain disulfides connect cysteine 3493–cysteine 3523, cysteine 3497–cysteine 3528, and cysteine 3508–cysteine 3513. Asparagine 3638 carries N-linked (GlcNAc...) asparagine glycosylation. TSP type-1 domains follow at residues 3657–3713 (HGSF…PECP), 3727–3779 (AGGW…PSCA), 3793–3849 (NCFW…RACP), and 3851–3906 (PGGW…MPCE). Disulfide bonds link cysteine 3669–cysteine 3707, cysteine 3673–cysteine 3712, and cysteine 3685–cysteine 3697. Asparagine 3761 carries an N-linked (GlcNAc...) asparagine glycan. Intrachain disulfides connect cysteine 3794/cysteine 3830, cysteine 3805/cysteine 3809, cysteine 3843/cysteine 3848, cysteine 3863/cysteine 3900, cysteine 3867/cysteine 3905, and cysteine 3878/cysteine 3890. The 56-residue stretch at 3909-3964 (CPAGMEMVSCANHCPYSCSDLQEGGMCQEDQACQLGCRCSEGFLEQDGGCVPVGHC) folds into the TIL 9 domain. The N-linked (GlcNAc...) asparagine glycan is linked to asparagine 3986. TSP type-1 domains lie at 4006 to 4059 (HCAW…VPCP), 4100 to 4155 (PRGW…QLCL), 4157 to 4213 (KLER…GPCQ), and 4215 to 4269 (DCTW…GNCS). 12 disulfide bridges follow: cysteine 4007–cysteine 4043, cysteine 4018–cysteine 4022, cysteine 4053–cysteine 4058, cysteine 4112–cysteine 4149, cysteine 4116–cysteine 4154, cysteine 4127–cysteine 4139, cysteine 4169–cysteine 4207, cysteine 4173–cysteine 4212, cysteine 4184–cysteine 4195, cysteine 4216–cysteine 4253, cysteine 4227–cysteine 4229, and cysteine 4263–cysteine 4268. An N-linked (GlcNAc...) asparagine glycan is attached at asparagine 4196. Residue asparagine 4267 is glycosylated (N-linked (GlcNAc...) asparagine). Positions 4273–4328 (CPPPFEFQSCGSPCAGLCATHLNHRLCQDLPPCQPGCYCPKGLLEQAGSCILPEQC) constitute a TIL 10 domain. N-linked (GlcNAc...) asparagine glycans are attached at residues asparagine 4408 and asparagine 4463. The TSP type-1 24 domain maps to 4465–4516 (TCQWGPWGPWSPCQMPCSGGFKLRWRVARDTSAGECPGPWAQTESCNMGSCP). Intrachain disulfides connect cysteine 4466–cysteine 4500, cysteine 4477–cysteine 4481, and cysteine 4510–cysteine 4515. Residues 4530–4576 (DCANQCPRSCADLWDGVQCLQGPCSPGCRCPPGQLVQDGHCVPISSC) enclose the TIL 11 domain. 3 N-linked (GlcNAc...) asparagine glycosylation sites follow: asparagine 4584, asparagine 4601, and asparagine 4606. Residues 4616 to 4669 (CPVLGPWSAWSECSAVCGKGTMVRHRSCEEHPDREPCQALDLQQWQECNLQACP) enclose the TSP type-1 25 domain. Intrachain disulfides connect cysteine 4628/cysteine 4663, cysteine 4632/cysteine 4668, and cysteine 4643/cysteine 4652. Residues 4671–4725 (CPPGQVLSTCATMCPSLCSHLWPGTICVREPCQLGCGCPGGQLLYNGTCIPPEAC) enclose the TIL 12 domain. N-linked (GlcNAc...) asparagine glycans are attached at residues asparagine 4716, asparagine 4756, asparagine 4799, and asparagine 4806. The TIL 13 domain occupies 4777 to 4835 (CAPGEIWQHGKLGPCEKTCPEMNMTQAWSNCTEAQAPGCVCQLGYFRSQTGLCVPEDHC). Residues 4835–4893 (CECWHHGSPHLPGSEWQEACESCRCLHGKSVCIRHCPELSCAQGEVIMQEPGSCCPICQ) form the VWFC 3 domain. 4 disulfide bridges follow: cysteine 4892/cysteine 4952, cysteine 4918/cysteine 4969, cysteine 4928/cysteine 4985, and cysteine 4932/cysteine 4987. The CTCK domain occupies 4892-4991 (CQQDTLKEEP…IHSCQCSACQ (100 aa)). N-linked (GlcNAc...) asparagine glycosylation occurs at asparagine 4912.

Belongs to the thrombospondin family. In terms of tissue distribution, subcommissural organ.

Its subcellular location is the secreted. It localises to the extracellular space. In terms of biological role, involved in the modulation of neuronal aggregation. May be involved in developmental events during the formation of the central nervous system. The protein is SCO-spondin of Mus musculus (Mouse).